Here is a 130-residue protein sequence, read N- to C-terminus: uncharacterized protein (130 aa).

This sequence belongs to the thioester dehydratase family. FabZ subfamily.

This is an uncharacterized protein from Bacillus subtilis (strain 168).